The chain runs to 179 residues: Enhancer of split m8 protein (179 aa).

The 56-residue stretch at 10–65 (YQKVKKPMLERQRRARMNKCLDNLKTLVAELRGDDGILRMDKAEMLESAVIFMRQQ) folds into the bHLH domain. Residues 83-116 (FKNGYMNAVNEVSRVMASTPGMSVDLGKSVMTHL) form the Orange domain. The interval 146-179 (DKAPLSPASSGYHSDCDSPAPSPQPMQQPLWRPW) is disordered. A WRPW motif motif is present at residues 176 to 179 (WRPW).

Homodimer. Heterodimers with dpn. Transcription repression requires formation of a complex with a corepressor protein (Groucho).

Its subcellular location is the nucleus. Its function is as follows. Participates in the control of cell fate choice by uncommitted neuroectodermal cells in the embryo. Transcriptional repressor. Binds DNA on N-box motifs: 5'-CACNAG-3'. Part of the Notch signaling pathway. The protein is Enhancer of split m8 protein of Drosophila melanogaster (Fruit fly).